The chain runs to 291 residues: Protease HtpX (291 aa).

The next 2 membrane-spanning stretches (helical) occupy residues 4-24 and 36-56; these read IALFLATNLAVMIVFSIVLNI and LSGLLVMAVLFGFGGSLISLM. Histidine 143 provides a ligand contact to Zn(2+). The active site involves glutamate 144. Histidine 147 lines the Zn(2+) pocket. 2 consecutive transmembrane segments (helical) span residues 151–171 and 199–219; these read GDMITMTLMQGVVNTFVIFLS and FIVSTILELAFGFLASFLTMW. Glutamate 225 contacts Zn(2+).

The protein belongs to the peptidase M48B family. The cofactor is Zn(2+).

The protein resides in the cell inner membrane. The protein is Protease HtpX of Aliivibrio fischeri (strain MJ11) (Vibrio fischeri).